The primary structure comprises 296 residues: Formamidopyrimidine-DNA glycosylase (296 aa).

Catalysis depends on proline 2, which acts as the Schiff-base intermediate with DNA. Residue glutamate 3 is the Proton donor of the active site. The active-site Proton donor; for beta-elimination activity is the lysine 61. Histidine 95, arginine 122, and lysine 169 together coordinate DNA. The FPG-type zinc-finger motif lies at 255–289; it reads NAYGRNDQPCARCGTPIQRETFMNRSSYSCPRCQP. Catalysis depends on arginine 279, which acts as the Proton donor; for delta-elimination activity.

It belongs to the FPG family. As to quaternary structure, monomer. It depends on Zn(2+) as a cofactor.

It carries out the reaction Hydrolysis of DNA containing ring-opened 7-methylguanine residues, releasing 2,6-diamino-4-hydroxy-5-(N-methyl)formamidopyrimidine.. The enzyme catalyses 2'-deoxyribonucleotide-(2'-deoxyribose 5'-phosphate)-2'-deoxyribonucleotide-DNA = a 3'-end 2'-deoxyribonucleotide-(2,3-dehydro-2,3-deoxyribose 5'-phosphate)-DNA + a 5'-end 5'-phospho-2'-deoxyribonucleoside-DNA + H(+). In terms of biological role, involved in base excision repair of DNA damaged by oxidation or by mutagenic agents. Acts as a DNA glycosylase that recognizes and removes damaged bases. Has a preference for oxidized purines, such as 7,8-dihydro-8-oxoguanine (8-oxoG). Has AP (apurinic/apyrimidinic) lyase activity and introduces nicks in the DNA strand. Cleaves the DNA backbone by beta-delta elimination to generate a single-strand break at the site of the removed base with both 3'- and 5'-phosphates. In Thermobifida fusca (strain YX), this protein is Formamidopyrimidine-DNA glycosylase.